A 99-amino-acid chain; its full sequence is Large ribosomal subunit protein bL27 (99 aa).

A propeptide spanning residues 1–10 (MKLIFDIQLF) is cleaved from the precursor.

Belongs to the bacterial ribosomal protein bL27 family. Post-translationally, the N-terminus is cleaved by ribosomal processing cysteine protease Prp.

The protein is Large ribosomal subunit protein bL27 of Caldicellulosiruptor saccharolyticus (strain ATCC 43494 / DSM 8903 / Tp8T 6331).